The primary structure comprises 874 residues: MSNDRPLTHSEAESSALRLGRNPGLQVRHDEVERSLLTPMLQHYAELKDAYPHALLLYRVGDFYETFFQDACTVARELELVLTGKEGGKEVGRVAMAGIPHHALERYCRTLIEKGYAIAICDQVEDPAQAQGLVKREVTQVFTPGTVLDTELLQPRRNNFLAAVVLSGNHWGLAYADVSTGEFCTTQGSDRADLVAELNRLQPAEILLPTEAPDINRVLRPGEGKDQLPPELPPQWCYTLRSPEDFQAAAARQRLCQRFQVKSLEGFGCEHLPLALRAAGGLVAYLDETHRQQPVPLQNLSTYSLQQYLFLDPQTRRNLELTQTVRDGSFQGSLLWAIDRTATAMGGRLLRRWLLQPLLDIEEITARQDAIAELMANSSLRQSLHRHLQEIYDLERLAGRAGSGTANARDLAALRDSFRTLVSLAAVVANTSSPYLQALAQLPPVIEQLADTLSAALVDQPPTSLSEGGILRPGAYPELDQQRQQIEQDQQWILNLEAQERQRTGISTLKVGYTKVFGYYLSVSRAKLNQVPDDYIRKQTLTNEERFITAELKEREARLLAAQSHLFELEYQYFVQLREQVAAQASTIREIAAAVAAVDALLGLAEVALYQGYCRPQLTRDRQLCIRGGRHPVVEQTLPAGFFVPNDTQLGTGADLMVLTGPNASGKSCYLRQVGLIQLLAQMGSYVPATSATLGICDRIFTRVGAVDDLATGQSTFMVEMNETANILNHAGDRSLVLLDEIGRGTATFDGLAIAWSVAEYLATILKSRTIFATHYHELNQLATLLPNVANYQVVVKELPNEIIFLHQVKPGGADRSYGIEAGRLAGLPAVVIQRAREVMCQIEKHSRITVGLRKSSMGDPPTAPEINQGELPF.

The segment covering 1 to 12 has biased composition (basic and acidic residues); the sequence is MSNDRPLTHSEA. Residues 1-20 are disordered; the sequence is MSNDRPLTHSEAESSALRLG. 661 to 668 serves as a coordination point for ATP; that stretch reads GPNASGKS. Residues 854–874 form a disordered region; the sequence is RKSSMGDPPTAPEINQGELPF.

The protein belongs to the DNA mismatch repair MutS family.

Functionally, this protein is involved in the repair of mismatches in DNA. It is possible that it carries out the mismatch recognition step. This protein has a weak ATPase activity. The protein is DNA mismatch repair protein MutS of Thermosynechococcus vestitus (strain NIES-2133 / IAM M-273 / BP-1).